The chain runs to 475 residues: Sulfate adenylyltransferase subunit 1 (475 aa).

In terms of domain architecture, tr-type G spans 25–239 (KSLLRFLTCG…EVLETVEIQR (215 aa)). Residues 34–41 (GSVDDGKS) are G1. 34–41 (GSVDDGKS) provides a ligand contact to GTP. The G2 stretch occupies residues 92–96 (GITID). The interval 113–116 (DTPG) is G3. GTP is bound by residues 113-117 (DTPGH) and 168-171 (NKMD). Residues 168–171 (NKMD) are G4. Positions 206–208 (SAL) are G5.

This sequence belongs to the TRAFAC class translation factor GTPase superfamily. Classic translation factor GTPase family. CysN/NodQ subfamily. In terms of assembly, heterodimer composed of CysD, the smaller subunit, and CysN.

It carries out the reaction sulfate + ATP + H(+) = adenosine 5'-phosphosulfate + diphosphate. The protein operates within sulfur metabolism; hydrogen sulfide biosynthesis; sulfite from sulfate: step 1/3. Functionally, with CysD forms the ATP sulfurylase (ATPS) that catalyzes the adenylation of sulfate producing adenosine 5'-phosphosulfate (APS) and diphosphate, the first enzymatic step in sulfur assimilation pathway. APS synthesis involves the formation of a high-energy phosphoric-sulfuric acid anhydride bond driven by GTP hydrolysis by CysN coupled to ATP hydrolysis by CysD. The chain is Sulfate adenylyltransferase subunit 1 from Shigella dysenteriae serotype 1 (strain Sd197).